The sequence spans 71 residues: Exodeoxyribonuclease 7 small subunit (71 aa).

Belongs to the XseB family. In terms of assembly, heterooligomer composed of large and small subunits.

Its subcellular location is the cytoplasm. It catalyses the reaction Exonucleolytic cleavage in either 5'- to 3'- or 3'- to 5'-direction to yield nucleoside 5'-phosphates.. Its function is as follows. Bidirectionally degrades single-stranded DNA into large acid-insoluble oligonucleotides, which are then degraded further into small acid-soluble oligonucleotides. In Streptococcus suis (strain 98HAH33), this protein is Exodeoxyribonuclease 7 small subunit.